We begin with the raw amino-acid sequence, 108 residues long: Transcription initiation factor IIA subunit 2 (108 aa).

This sequence belongs to the TFIIA subunit 2 family. As to quaternary structure, TFIIA is a heterodimer of the large unprocessed subunit 1 and a small subunit gamma. It was originally believed to be a heterotrimer of an alpha, a beta and a gamma subunit. Interacts with NCOA6 general coactivator. TFIIA forms a complex with TBP.

The protein resides in the nucleus. In terms of biological role, TFIIA is a component of the transcription machinery of RNA polymerase II and plays an important role in transcriptional activation. TFIIA in a complex with TBP mediates transcriptional activity. This is Transcription initiation factor IIA subunit 2 (gtf2a2) from Oncorhynchus mykiss (Rainbow trout).